Reading from the N-terminus, the 68-residue chain is MSDTKPCVCLDGSCSCENTCRCSDCRCPTSKAGRCQKSCCSCCPAGCTNCANGCVCKGKASDKCSCCS.

A divalent metal cation contacts are provided by Cys-7, Cys-9, Cys-14, Cys-16, Cys-20, Cys-22, Cys-25, Cys-27, Cys-35, Cys-39, Cys-40, Cys-42, Cys-43, Cys-47, Cys-50, Cys-54, Cys-56, Cys-64, Cys-66, and Cys-67.

This sequence belongs to the metallothionein superfamily. Type 1 family.

In terms of biological role, metallothioneins have a high content of cysteine residues that bind various heavy metals. The protein is Metallothionein (mt) of Scyliorhinus torazame (Cloudy catshark).